A 393-amino-acid polypeptide reads, in one-letter code: Dual specificity mitogen-activated protein kinase kinase 1 (393 aa).

Positions 1 to 27 are disordered; it reads MPKKKPTPIQLNPAPDGSAVNGTSSAE. The region spanning 68–361 is the Protein kinase domain; that stretch reads FEKISELGAG…LKQLMVHAFI (294 aa). ATP contacts are provided by residues 74–82 and K97; that span reads LGAGNGGVV. Residue D190 is the Proton acceptor of the active site. 2 positions are modified to phosphoserine; by RAF: S218 and S222. The segment at 270-307 is RAF1-binding; sequence ELELLFGCQVEGDAAETPPRPRTPGRPLSSYGMDSRPP. T286 is subject to Phosphothreonine. T292 carries the phosphothreonine; by MAPK1 modification. S298 carries the phosphoserine; by PAK modification.

The protein belongs to the protein kinase superfamily. STE Ser/Thr protein kinase family. MAP kinase kinase subfamily. As to quaternary structure, found in a complex with at least BRAF, HRAS, MAP2K1, MAPK3/ERK1 and RGS14. Forms a heterodimer with MAP2K2/MEK2. Forms heterodimers with KSR2 which further dimerize to form tetramers. Interacts with KSR1 or KSR2 and BRAF; the interaction with KSR1 or KSR2 mediates KSR1-BRAF or KSR2-BRAF dimerization. Interacts with ARBB2, LAMTOR3, MAPK1/ERK2 and RAF1. Interacts with MAPK1/ERK2. Interacts with MORG1. Interacts with PPARG. Interacts with VRK2. Interacts with SGK1. Interacts with BIRC6/bruce. Interacts with KAT7; the interaction promotes KAT7 phosphorylation. Interacts with RAF1 and NEK10; the interaction is required for ERK1/2-signaling pathway activation in response to UV irradiation. Interacts with TRAF3IP3. Interacts with MOS. In terms of processing, phosphorylation at Ser-218 and Ser-222 by MAP kinase kinase kinases (BRAF or MEKK1) positively regulates kinase activity. Also phosphorylated at Thr-292 by MAPK1/ERK2 and at Ser-298 by PAK. MAPK1/ERK2 phosphorylation of Thr-292 occurs in response to cellular adhesion and leads to inhibition of Ser-298 phosphorylation by PAK. Autophosphorylated at Ser-218 and Ser-222, autophosphosphorylation is promoted by NEK10 following UV irradiation.

Its subcellular location is the cytoplasm. It localises to the cytoskeleton. The protein localises to the microtubule organizing center. The protein resides in the centrosome. It is found in the spindle pole body. Its subcellular location is the nucleus. It localises to the membrane. The enzyme catalyses L-seryl-[protein] + ATP = O-phospho-L-seryl-[protein] + ADP + H(+). It catalyses the reaction L-threonyl-[protein] + ATP = O-phospho-L-threonyl-[protein] + ADP + H(+). The catalysed reaction is L-tyrosyl-[protein] + ATP = O-phospho-L-tyrosyl-[protein] + ADP + H(+). With respect to regulation, ras proteins such as HRAS mediate the activation of RAF proteins such as RAF1 or BRAF which in turn activate extracellular signal-regulated kinases (ERK) through MAPK (mitogen-activated protein kinases) and ERK kinases MAP2K1/MEK1 and MAP2K2/MEK2. Activation occurs through phosphorylation of Ser-218 and Ser-222. MAP2K1/MEK1 binds KSR1 or KSR2 releasing the inhibitory intramolecular interaction between KSR1 or KSR2 protein kinase and N-terminal domains. This allows KSR1 or KSR2 dimerization with BRAF leading to BRAF activation and phosphorylation of MAP2K1. MAP2K1/MEK1 is also the target of negative feed-back regulation by its substrate kinases, such as MAPK1/ERK2. These phosphorylate MAP2K1/MEK1 on Thr-292, thereby facilitating dephosphorylation of the activating residues Ser-218 and Ser-222. Inhibited by serine/threonine phosphatase 2A. Its function is as follows. Dual specificity protein kinase which acts as an essential component of the MAP kinase signal transduction pathway. Binding of extracellular ligands such as growth factors, cytokines and hormones to their cell-surface receptors activates RAS and this initiates RAF1 activation. RAF1 then further activates the dual-specificity protein kinases MAP2K1/MEK1 and MAP2K2/MEK2. Both MAP2K1/MEK1 and MAP2K2/MEK2 function specifically in the MAPK/ERK cascade, and catalyze the concomitant phosphorylation of a threonine and a tyrosine residue in a Thr-Glu-Tyr sequence located in the extracellular signal-regulated kinases MAPK3/ERK1 and MAPK1/ERK2, leading to their activation and further transduction of the signal within the MAPK/ERK cascade. Activates BRAF in a KSR1 or KSR2-dependent manner; by binding to KSR1 or KSR2 releases the inhibitory intramolecular interaction between KSR1 or KSR2 protein kinase and N-terminal domains which promotes KSR1 or KSR2-BRAF dimerization and BRAF activation. Depending on the cellular context, this pathway mediates diverse biological functions such as cell growth, adhesion, survival and differentiation, predominantly through the regulation of transcription, metabolism and cytoskeletal rearrangements. One target of the MAPK/ERK cascade is peroxisome proliferator-activated receptor gamma (PPARG), a nuclear receptor that promotes differentiation and apoptosis. MAP2K1/MEK1 has been shown to export PPARG from the nucleus. The MAPK/ERK cascade is also involved in the regulation of endosomal dynamics, including lysosome processing and endosome cycling through the perinuclear recycling compartment (PNRC), as well as in the fragmentation of the Golgi apparatus during mitosis. In Rattus norvegicus (Rat), this protein is Dual specificity mitogen-activated protein kinase kinase 1.